Consider the following 835-residue polypeptide: MKVLALRHSVAQIYADTQVYTHDDSKDDYENAFLISNLTTHNILYLNYSVKTLQILNKSGIAAIEIQKIDELFTLIRCNFTYDYIDDVVYLHDYSYYANNEIRTDQYWVTKTNIEDYLLPGWKLTYVGYNGSDTRGHYNFSFRCQNAATDDDVIIEYIYSNELDFQNFILKKIKERMTTSLPIARLSNRVFRDKLFKTLSVNHDKVVNVGPRNESMFTFLDHPSIKQFSNGPYLVKDTIKLKQERWLGKRLSQFDIGQYKNMLNVLTTLYQYYDMYHEKPIIYMIGSAPSYWIYDVKQYSDLKFETWDPLDTPYSNLHHKELFYINDVQKLKDNSILYIDIRTDRGNMDWKEWRKVVEGQTADNLHIAYKYLSTGKAKICCVKMTAMDVELPISAKLLHHPTTEIRSEFYLMMDIWDSKNIKRFIPKGVLYSYINNTITENVFIQQPFKLKTLKNEYVIALYALSNDLNNREDVVKLINNQKRALITVRINNTFKDEPKVGFKNIYDWTFLPTDFEMNGSIITSYDGCLGIFGLSISLASKPTGNNHLFILSGTDKYFKLDQFANHMSISRRSHQIRFSESATSYSGYIFRDLSNNNFNLIGTNVENSVSGHVYNALIYYRYNYSFDLKRWIYLHSTGKASIEGGKYYEHAPIELIYACRSAREFAKLQDDLTVLRYSNEIENYINKVYSITYADDPNYFIGIKFKNIPYKYNVKVPHLTFGVLNISEQMLPDAIAILKKFKNELFGMDITTSYTYMLSDEVYVANISGVLSTYFKIYNAFYKEQITFGQSRMFIPHVTLSFSNEKTVRIDTTKLYIDSIYLRKIKGDTVFDMTE.

The tract at residues 171 to 245 (KKIKERMTTS…KDTIKLKQER (75 aa)) is N7-methyltransferase activity. The segment at 246–428 (WLGKRLSQFD…KNIKRFIPKG (183 aa)) is 2'-O-methyltransferase activity. The tract at residues 429–555 (VLYSYINNTI…NHLFILSGTD (127 aa)) is N7-methyltransferase activity. The interval 556–692 (KYFKLDQFAN…NYINKVYSIT (137 aa)) is GTase/RTPase activity. The interval 693-835 (YADDPNYFIG…KGDTVFDMTE (143 aa)) is 2'-5'-phosphodiesterase activity. Residues histidine 718, threonine 720, histidine 797, and threonine 799 each act as for 2'-5'-phosphodiesterase activity in the active site.

Belongs to the rotavirus VP3 family. Interacts with VP1. Interacts with VP2.

It is found in the virion. It carries out the reaction a 5'-end diphospho-ribonucleoside in mRNA + GTP + H(+) = a 5'-end (5'-triphosphoguanosine)-ribonucleoside in mRNA + diphosphate. The enzyme catalyses a 5'-end (5'-triphosphoguanosine)-ribonucleoside in mRNA + S-adenosyl-L-methionine = a 5'-end (N(7)-methyl 5'-triphosphoguanosine)-ribonucleoside in mRNA + S-adenosyl-L-homocysteine. It catalyses the reaction 5'-triphosphoadenylyl-(2'-&gt;5')-adenylyl-(2'-&gt;5')-adenosine + 2 H2O = 2 AMP + ATP + 2 H(+). Multifunctional enzyme involved in mRNA capping. Catalyzes the formation of the 5' cap structure on the viral plus-strand transcripts. Specifically binds to GTP and displays guanylyltransferase and methyltransferase activities. Has affinity for ssRNA but not for dsRNA. Capping activity is non-specific and caps RNAs that initiate with either a G or an A residue. Together with VP1 polymerase, forms a VP1-VP3 complex positioned near the channels situated at each of the five-fold vertices of the core. Following infection, the outermost layer of the virus is lost, leaving a double-layered particle (DLP) made up of the core and VP6 shell. VP1 then catalyzes the transcription of fully conservative plus-strand genomic RNAs that are capped by VP3 and extruded through the DLP's channels into the cytoplasm where they function as mRNAs for translation of viral proteins. DLPs probably have an RNA triphosphatase activity as well, whereas open cores do not. Functionally, counteracts the host innate immune response thanks to its phosphodiesterase that degrades the 5'-triphosphorylated, 2'-5' linked adenylate oligomers produced by the host cell IFN-inducible 2',5'-oligoadenylate synthetase (OAS). The host RNaseL is therefore not activated. In Rotavirus A (strain RVA/Human/United States/DS-1/1976/G2P1B[4]) (RV-A), this protein is Protein VP3.